A 375-amino-acid chain; its full sequence is Aminomethyltransferase (375 aa).

The protein belongs to the GcvT family. As to quaternary structure, the glycine cleavage system is composed of four proteins: P, T, L and H.

The catalysed reaction is N(6)-[(R)-S(8)-aminomethyldihydrolipoyl]-L-lysyl-[protein] + (6S)-5,6,7,8-tetrahydrofolate = N(6)-[(R)-dihydrolipoyl]-L-lysyl-[protein] + (6R)-5,10-methylene-5,6,7,8-tetrahydrofolate + NH4(+). Its function is as follows. The glycine cleavage system catalyzes the degradation of glycine. The protein is Aminomethyltransferase of Cupriavidus pinatubonensis (strain JMP 134 / LMG 1197) (Cupriavidus necator (strain JMP 134)).